Reading from the N-terminus, the 66-residue chain is Large ribosomal subunit protein bL35 (66 aa).

Basic residues-rich tracts occupy residues 1 to 16 and 38 to 49; these read MPKM…RVKR and TKQKRQLRKARL. Residues 1–49 form a disordered region; that stretch reads MPKMKTHRGAAKRVKRTASGQLKRSRAFTSHLFANKSTKQKRQLRKARL.

It belongs to the bacterial ribosomal protein bL35 family.

The protein is Large ribosomal subunit protein bL35 of Staphylococcus aureus (strain MSSA476).